Consider the following 642-residue polypeptide: Zinc finger protein 14 (642 aa).

The KRAB domain maps to Val4 to Lys76. The C2H2-type 1 zinc-finger motif lies at His103–His125. A C2H2-type 2; degenerate zinc finger spans residues Arg141–His163. The segment at Tyr169–His191 adopts a C2H2-type 3 zinc-finger fold. Residues Tyr197–His217 form a C2H2-type 4; atypical zinc finger. 15 C2H2-type zinc fingers span residues Tyr223–His245, Tyr251–His273, Tyr279–His301, Tyr307–His329, Tyr335–His357, Tyr363–His385, Tyr391–His413, Tyr419–His441, Tyr447–His469, Tyr475–His497, Tyr503–His525, Phe531–His553, Tyr559–His581, Tyr587–His609, and Tyr615–His637.

The protein belongs to the krueppel C2H2-type zinc-finger protein family.

The protein localises to the nucleus. Functionally, may be involved in transcriptional regulation. In Pongo abelii (Sumatran orangutan), this protein is Zinc finger protein 14 (ZNF14).